Reading from the N-terminus, the 212-residue chain is uncharacterized protein (212 aa).

This is an uncharacterized protein from Mycobacterium tuberculosis (strain ATCC 25618 / H37Rv).